The primary structure comprises 480 residues: Endothelial transcription factor GATA-2 (480 aa).

S73 is subject to Phosphoserine. R86 is modified (asymmetric dimethylarginine). The segment at 166–208 (SGSHLFGFPPTPPKEVSPDPSTTGAASPASPSAGGSVARGEDK) is disordered. Low complexity predominate over residues 183 to 201 (PDPSTTGAASPASPSAGGS). Position 192 is a phosphoserine (S192). 2 GATA-type zinc fingers span residues 295–319 (CVNC…CNAC) and 349–373 (CANC…CNAC). K389 is covalently cross-linked (Glycyl lysine isopeptide (Lys-Gly) (interchain with G-Cter in SUMO2)). Residues 457–480 (TPIHPSSSLSFGHPHPSSMVTAMG) form a disordered region.

As to quaternary structure, interacts with BRD3. Interacts with AR and CCAR1. Interacts with MDFIC.

It is found in the nucleus. Transcriptional activator which regulates endothelin-1 gene expression in endothelial cells. Binds to the consensus sequence 5'-AGATAG-3'. Plays an important role in the regulation of phagocytosis in alveolar macrophages, particularly during P.carinii infection. The protein is Endothelial transcription factor GATA-2 of Rattus norvegicus (Rat).